Reading from the N-terminus, the 316-residue chain is Phospholipase A1 2 (316 aa).

The first 4 residues, Ala-1–Leu-4, serve as a signal peptide directing secretion. A propeptide spanning residues Thr-5–Arg-14 is cleaved from the precursor. Residues Cys-20 and Cys-103 are joined by a disulfide bond. Residue Ser-153 is the Nucleophile of the active site. The active-site Charge relay system is Asp-181. Intrachain disulfides connect Cys-192-Cys-197 and Cys-235-Cys-240. Catalysis depends on His-242, which acts as the Charge relay system. Cystine bridges form between Cys-257–Cys-284, Cys-258–Cys-309, and Cys-277–Cys-282.

Belongs to the AB hydrolase superfamily. Lipase family. Expressed by the venom gland.

It localises to the secreted. The catalysed reaction is a 1,2-diacyl-sn-glycero-3-phosphocholine + H2O = a 2-acyl-sn-glycero-3-phosphocholine + a fatty acid + H(+). Its function is as follows. Catalyzes the hydrolysis of phosphatidylcholine with phospholipase A1 activity. May act as an allergen and induce hemolytic activity. The protein is Phospholipase A1 2 of Polistes dominula (European paper wasp).